Consider the following 488-residue polypeptide: Aspartyl/glutamyl-tRNA(Asn/Gln) amidotransferase subunit B (488 aa).

It belongs to the GatB/GatE family. GatB subfamily. Heterotrimer of A, B and C subunits.

It catalyses the reaction L-glutamyl-tRNA(Gln) + L-glutamine + ATP + H2O = L-glutaminyl-tRNA(Gln) + L-glutamate + ADP + phosphate + H(+). The enzyme catalyses L-aspartyl-tRNA(Asn) + L-glutamine + ATP + H2O = L-asparaginyl-tRNA(Asn) + L-glutamate + ADP + phosphate + 2 H(+). Functionally, allows the formation of correctly charged Asn-tRNA(Asn) or Gln-tRNA(Gln) through the transamidation of misacylated Asp-tRNA(Asn) or Glu-tRNA(Gln) in organisms which lack either or both of asparaginyl-tRNA or glutaminyl-tRNA synthetases. The reaction takes place in the presence of glutamine and ATP through an activated phospho-Asp-tRNA(Asn) or phospho-Glu-tRNA(Gln). The sequence is that of Aspartyl/glutamyl-tRNA(Asn/Gln) amidotransferase subunit B from Chlamydia trachomatis serovar A (strain ATCC VR-571B / DSM 19440 / HAR-13).